Here is a 276-residue protein sequence, read N- to C-terminus: Non-heme chloroperoxidase (276 aa).

The AB hydrolase-1 domain maps to 24-254 (PVVFHHGWPL…NATLKSYEGL (231 aa)). Residues serine 97, aspartate 227, and histidine 256 contribute to the active site.

The protein belongs to the AB hydrolase superfamily. Bacterial non-heme haloperoxidase / perhydrolase family. In terms of assembly, homodimer.

The chain is Non-heme chloroperoxidase (cpo) from Streptomyces lividans.